A 118-amino-acid chain; its full sequence is Ribonuclease P protein component (118 aa).

The protein belongs to the RnpA family. In terms of assembly, consists of a catalytic RNA component (M1 or rnpB) and a protein subunit.

The catalysed reaction is Endonucleolytic cleavage of RNA, removing 5'-extranucleotides from tRNA precursor.. Functionally, RNaseP catalyzes the removal of the 5'-leader sequence from pre-tRNA to produce the mature 5'-terminus. It can also cleave other RNA substrates such as 4.5S RNA. The protein component plays an auxiliary but essential role in vivo by binding to the 5'-leader sequence and broadening the substrate specificity of the ribozyme. The sequence is that of Ribonuclease P protein component from Rickettsia akari (strain Hartford).